A 204-amino-acid chain; its full sequence is Methylthioribulose-1-phosphate dehydratase (204 aa).

H95 and H97 together coordinate Zn(2+).

This sequence belongs to the aldolase class II family. MtnB subfamily. The cofactor is Zn(2+).

The enzyme catalyses 5-(methylsulfanyl)-D-ribulose 1-phosphate = 5-methylsulfanyl-2,3-dioxopentyl phosphate + H2O. It functions in the pathway amino-acid biosynthesis; L-methionine biosynthesis via salvage pathway; L-methionine from S-methyl-5-thio-alpha-D-ribose 1-phosphate: step 2/6. In terms of biological role, catalyzes the dehydration of methylthioribulose-1-phosphate (MTRu-1-P) into 2,3-diketo-5-methylthiopentyl-1-phosphate (DK-MTP-1-P). This is Methylthioribulose-1-phosphate dehydratase from Parvibaculum lavamentivorans (strain DS-1 / DSM 13023 / NCIMB 13966).